The chain runs to 261 residues: Flagellar L-ring protein (261 aa).

The first 18 residues, 1–18, serve as a signal peptide directing secretion; sequence MAAMKRLLASSLLILLSG. Residue cysteine 19 is the site of N-palmitoyl cysteine attachment. Cysteine 19 carries S-diacylglycerol cysteine lipidation. The tract at residues 37-67 is disordered; the sequence is TVDAVEGDKSESNSGLTDALRNRTDPVAGDP.

The protein belongs to the FlgH family. The basal body constitutes a major portion of the flagellar organelle and consists of four rings (L,P,S, and M) mounted on a central rod.

Its subcellular location is the cell outer membrane. The protein localises to the bacterial flagellum basal body. Assembles around the rod to form the L-ring and probably protects the motor/basal body from shearing forces during rotation. This chain is Flagellar L-ring protein, found in Vibrio cholerae serotype O1 (strain ATCC 39541 / Classical Ogawa 395 / O395).